The sequence spans 305 residues: Putative E3 ubiquitin-protein ligase SINAT1 (305 aa).

The RING-type zinc finger occupies 57–93 (CPVCTNLMYPPIHQCPNGHTLCSSCKLRVQNTCPTCR). The segment at 107 to 300 (VAESLEVPCR…EELKLRVTGR (194 aa)) is SBD. An SIAH-type zinc finger spans residues 110–170 (SLEVPCRYQN…LVDHLKDDHK (61 aa)). 8 residues coordinate Zn(2+): C115, C122, H134, C138, C145, C152, H164, and H169.

The protein belongs to the SINA (Seven in absentia) family. As to quaternary structure, interacts with SINAT6. Interacts with ATG6 and TRAF1A. Interacts with WAV3. Interacts with FREE1. Interacts with ELC/VPS23A.

The protein localises to the endosome. It localises to the multivesicular body. The protein resides in the cytoplasmic vesicle. It is found in the autophagosome. The catalysed reaction is S-ubiquitinyl-[E2 ubiquitin-conjugating enzyme]-L-cysteine + [acceptor protein]-L-lysine = [E2 ubiquitin-conjugating enzyme]-L-cysteine + N(6)-ubiquitinyl-[acceptor protein]-L-lysine.. It participates in protein modification; protein ubiquitination. In terms of biological role, E3 ubiquitin-protein ligase that mediates ubiquitination and subsequent proteasomal degradation of target proteins. E3 ubiquitin ligases accept ubiquitin from an E2 ubiquitin-conjugating enzyme in the form of a thioester and then directly transfers the ubiquitin to targeted substrates. It probably triggers the ubiquitin-mediated degradation of different substrates. Mediates the proteasomal-dependent degradation of ATG6, a component of the autophagosome complex. Requires TRAF1A/MUSE14 and TRAF1B/MUSE13 to target ATG6 for ubiquitination and subsequent regulation of autophagosome assembly. Modulates directly the ubiquitination and proteasomal-dependent degradation of FREE1, a component of the ESCRT-I complex. Modulates directly the ubiquitination and proteasomal-dependent degradation of ELC/VPS23A, a component of the ESCRT-I complex. The protein is Putative E3 ubiquitin-protein ligase SINAT1 of Arabidopsis thaliana (Mouse-ear cress).